Reading from the N-terminus, the 351-residue chain is DNA polymerase IV (351 aa).

Positions 4-185 (IIHVDMDCFF…LPLAKIPGVG (182 aa)) constitute a UmuC domain. Mg(2+)-binding residues include aspartate 8 and aspartate 103. The active site involves glutamate 104.

Belongs to the DNA polymerase type-Y family. In terms of assembly, monomer. Mg(2+) serves as cofactor.

The protein localises to the cytoplasm. It carries out the reaction DNA(n) + a 2'-deoxyribonucleoside 5'-triphosphate = DNA(n+1) + diphosphate. Poorly processive, error-prone DNA polymerase involved in untargeted mutagenesis. Copies undamaged DNA at stalled replication forks, which arise in vivo from mismatched or misaligned primer ends. These misaligned primers can be extended by PolIV. Exhibits no 3'-5' exonuclease (proofreading) activity. May be involved in translesional synthesis, in conjunction with the beta clamp from PolIII. This Escherichia coli O6:H1 (strain CFT073 / ATCC 700928 / UPEC) protein is DNA polymerase IV (dinB).